Here is a 474-residue protein sequence, read N- to C-terminus: PRAME family member 10 (474 aa).

The stretch at 97–124 (RWKLQVLDLRDVDENFWTIWSGARVLSC) is one LRR 1; degenerate repeat. An LRR 2; degenerate repeat occupies 179–203 (HLCCSKVQNYSMPTSSFRNLLERIY). Residues 204 to 230 (PDSIQELEVWKKCSLNKTGKFAPYLSQ) form an LRR 3; degenerate repeat. The stretch at 231-265 (MSNLRELFLAFGYERELYVSVQWPCIPDLDSPFLC) is one LRR 4; degenerate repeat. LRR repeat units follow at residues 266–291 (LYYP…LRYL), 292–323 (KNPL…SQLK), 324–342 (ELRL…PLGV), 348–375 (AATL…ALSH), and 376–400 (CSQL…LLRH).

This sequence belongs to the PRAME family.

In Homo sapiens (Human), this protein is PRAME family member 10.